The primary structure comprises 341 residues: LIM and senescent cell antigen-like-containing domain protein 2 (341 aa).

LIM zinc-binding domains are found at residues 13–74 (AVCQ…LFAP), 76–133 (CGSC…EKAK), 138–195 (YICQ…KMGV), 196–255 (PICG…LFGD), and 256–315 (VCYN…FPLE). The residue at position 22 (Phe-22) is a Phosphoserine. Phosphothreonine is present on Thr-327. Ser-328 is subject to Phosphoserine.

As to quaternary structure, interacts with TGFB1I1. Interacts with integrin-linked protein kinase 1 (ILK) via the first LIM domain, and in competition with LIMS1. Part of the heterotrimeric IPP complex composed of integrin-linked kinase (ILK), LIMS1 or LIMS2, and PARVA.

The protein localises to the nucleus. Its subcellular location is the cell junction. The protein resides in the focal adhesion. It is found in the cell membrane. Adapter protein in a cytoplasmic complex linking beta-integrins to the actin cytoskeleton, bridges the complex to cell surface receptor tyrosine kinases and growth factor receptors. Plays a role in modulating cell spreading and migration. This is LIM and senescent cell antigen-like-containing domain protein 2 (LIMS2) from Homo sapiens (Human).